We begin with the raw amino-acid sequence, 131 residues long: Hydrophilin PGA14 (131 aa).

Positions 1 to 18 (MKFTTVATVFAISSLAAA) are cleaved as a signal peptide. Basic and acidic residues-rich tracts occupy residues 42–59 (YGRF…ETGT) and 79–96 (KESD…RDSK). Residues 42-110 (YGRFDKTSRS…NSTTSSGNNG (69 aa)) form a disordered region. N-linked (GlcNAc...) asparagine glycans are attached at residues asparagine 97 and asparagine 101. Over residues 97–110 (NASSNSTTSSGNNG) the composition is skewed to low complexity. Serine 105 carries GPI-anchor amidated serine lipidation. A propeptide spans 106–131 (SGNNGVATGVSLGLAGVLAVGAALVI) (removed in mature form).

It belongs to the PGA14 family. The GPI-anchor is attached to the protein in the endoplasmic reticulum and serves to target the protein to the cell surface. There, the glucosamine-inositol phospholipid moiety is cleaved off and the GPI-modified mannoprotein is covalently attached via its lipidless GPI glycan remnant to the 1,6-beta-glucan of the outer cell wall layer.

The protein localises to the secreted. The protein resides in the cell wall. Its subcellular location is the membrane. Functionally, hydrophilin which is essential to overcome the simple stress of the desiccation-rehydration process. In Candida albicans (strain SC5314 / ATCC MYA-2876) (Yeast), this protein is Hydrophilin PGA14 (PGA14).